The chain runs to 208 residues: PITH domain-containing protein ZK353.9 (208 aa).

The region spanning 17 to 189 (EVPGDDVYRY…RIAIATYESR (173 aa)) is the PITH domain.

The protein belongs to the PITHD1 family.

The polypeptide is PITH domain-containing protein ZK353.9 (Caenorhabditis elegans).